Here is a 379-residue protein sequence, read N- to C-terminus: Probable peptidoglycan glycosyltransferase FtsW (379 aa).

Residues 1-15 (MHKTEAQTYLLYDRT) are Cytoplasmic-facing. A helical transmembrane segment spans residues 16–36 (LLLLTMGLVGIGLVMVISTSM). Residues 37-52 (PIGVRLSEDPFYFARR) are Periplasmic-facing. A helical transmembrane segment spans residues 53–73 (YAFYLGLAVVLSLVTLGIPMA). The Cytoplasmic portion of the chain corresponds to 74-79 (SWQRGS). Residues 80–100 (SLILLITLIMLLLVLIAGQSV) traverse the membrane as a helical segment. The Periplasmic portion of the chain corresponds to 101–113 (NGAVRWLALGPWR). Residues 114 to 133 (IQPAELSKLALFCYLASYLV) traverse the membrane as a helical segment. The Cytoplasmic segment spans residues 134-139 (RKAEEV). A helical transmembrane segment spans residues 140–162 (RTNFWGFCKPIGVMVLLAILLLA). Residues 163-165 (QPD) lie on the Periplasmic side of the membrane. The helical transmembrane segment at 166–183 (LGTVLVLFITTLAMLFLA) threads the bilayer. Over 184–186 (EAK) the chain is Cytoplasmic. A helical membrane pass occupies residues 187–207 (IWQFLPIIGTGILAVMLLIIA). Topologically, residues 208–269 (KPYRRRRVTS…TEAHTDFICS (62 aa)) are periplasmic. The chain crosses the membrane as a helical span at residues 270–290 (ILGEELGYFGVLLALLMVFLV). At 291–301 (AFRAMSIGRKA) the chain is on the cytoplasmic side. Residues 302 to 322 (LAINQIFSGFLACSIGIWFSF) traverse the membrane as a helical segment. At 323-342 (QTMVNVGAAAGMLPTKGLTL) the chain is on the periplasmic side. Residues 343–363 (PFISYGGSSMLIMLTAIVLLI) form a helical membrane-spanning segment. Over 364 to 379 (RIDFETRLAKLQAFVR) the chain is Cytoplasmic.

This sequence belongs to the SEDS family. FtsW subfamily.

The protein localises to the cell inner membrane. It carries out the reaction [GlcNAc-(1-&gt;4)-Mur2Ac(oyl-L-Ala-gamma-D-Glu-L-Lys-D-Ala-D-Ala)](n)-di-trans,octa-cis-undecaprenyl diphosphate + beta-D-GlcNAc-(1-&gt;4)-Mur2Ac(oyl-L-Ala-gamma-D-Glu-L-Lys-D-Ala-D-Ala)-di-trans,octa-cis-undecaprenyl diphosphate = [GlcNAc-(1-&gt;4)-Mur2Ac(oyl-L-Ala-gamma-D-Glu-L-Lys-D-Ala-D-Ala)](n+1)-di-trans,octa-cis-undecaprenyl diphosphate + di-trans,octa-cis-undecaprenyl diphosphate + H(+). It functions in the pathway cell wall biogenesis; peptidoglycan biosynthesis. Functionally, peptidoglycan polymerase that is essential for cell division. The sequence is that of Probable peptidoglycan glycosyltransferase FtsW from Moranella endobia (strain PCIT).